The primary structure comprises 34 residues: MAATVVSGAQVAIAFVVALIAGIAALLLSTALGK.

The chain crosses the membrane as a helical span at residues 11-31; sequence VAIAFVVALIAGIAALLLSTA.

Belongs to the PsaM family. As to quaternary structure, the G.violaceus PSI reaction center is composed of one copy each of PsaA,B,C,D,E,F,L,M and Z, and forms trimeric complexes.

The protein localises to the cell inner membrane. The chain is Photosystem I reaction center subunit XII from Gloeobacter violaceus (strain ATCC 29082 / PCC 7421).